We begin with the raw amino-acid sequence, 2272 residues long: Voltage-dependent R-type calcium channel subunit alpha-1E (2272 aa).

The tract at residues 1-40 (MARFGEAVVVGRPGSGDGDSDQSRNRQGTPVPASGPAAAY) is disordered. The Cytoplasmic segment spans residues 1 to 90 (MARFGEAVVV…KYAKKLIDWP (90 aa)). A phosphoserine mark is found at S15 and S20. An I repeat occupies 77-355 (NIVRKYAKKL…LVLGVLSGEF (279 aa)). The helical transmembrane segment at 91–109 (PFEYMILATIIANCIVLAL) threads the bilayer. The Extracellular segment spans residues 110 to 128 (EQHLPEDDKTPMSRRLEKT). The chain crosses the membrane as a helical span at residues 129 to 147 (EPYFIGIFCFEAGIKIVAL). Residues 148-159 (GFIFHKGSYLRN) lie on the Cytoplasmic side of the membrane. A helical membrane pass occupies residues 160–174 (GWNVMDFIVVLSGIL). Residues 175–186 (ATAGTHFNTHVD) are Extracellular-facing. A helical transmembrane segment spans residues 187-206 (LRALRAVRVLRPLKLVSGIP). The Cytoplasmic portion of the chain corresponds to 207 to 224 (SLQIVLKSIMKAMVPLLQ). The chain crosses the membrane as a helical span at residues 225-245 (IGLLLFFAILMFAIIGLEFYS). The Extracellular portion of the chain corresponds to 246 to 327 (GKLHRACFMN…NTNDALGATW (82 aa)). N255 is a glycosylation site (N-linked (GlcNAc...) asparagine). Residues 328 to 351 (NWLYFIPLIIIGSFFVLNLVLGVL) traverse the membrane as a helical segment. Topologically, residues 352–477 (SGEFAKERER…ISIRHMVKSQ (126 aa)) are cytoplasmic. Residues 375 to 392 (QQIERELNGYRAWIDKAE) are binding to the beta subunit. D427 contacts Ca(2+). S428 bears the Phosphoserine mark. Ca(2+)-binding residues include S429, E431, C433, and S438. Phosphothreonine is present on T441. The stretch at 463-707 (ERLLRISIRH…VFLAIAVDNL (245 aa)) is one II repeat. The chain crosses the membrane as a helical span at residues 478-497 (VFYWIVLSVVALNTACVAIV). The Extracellular portion of the chain corresponds to 498-510 (HHNQPQWLTHLLY). Residues 511-530 (YAEFLFLGLFLLEMSLKMYG) traverse the membrane as a helical segment. Topologically, residues 531–539 (MGPRLYFHS) are cytoplasmic. A helical transmembrane segment spans residues 540–558 (SFNCFDFGVTVGSIFEVVW). The Extracellular portion of the chain corresponds to 559–568 (AIFRPGTSFG). A helical transmembrane segment spans residues 569–587 (ISVLRALRLLRIFKITKYW). The Cytoplasmic segment spans residues 588–606 (ASLRNLVVSLMSSMKSIIS). The helical transmembrane segment at 607–626 (LLFLLFLFIVVFALLGMQLF) threads the bilayer. Topologically, residues 627–679 (GGRFNFNDGTPSANFDTFPAAIMTVFQILTGEDWNEVMYNGIRSQGGVSSGMW) are extracellular. The chain crosses the membrane as a helical span at residues 680–704 (SAIYFIVLTLFGNYTLLNVFLAIAV). The Cytoplasmic portion of the chain corresponds to 705–1150 (DNLANAQELT…TTNPIRRACH (446 aa)). A disordered region spans residues 730–777 (LQKAKEVSPMSAPNMPSIERDRRRRHHMSMWEPRSSHLRERRRRHHMS). Phosphoserine is present on residues S737, S746, S794, S816, and S856. 2 disordered regions span residues 854 to 994 (GGSL…VPRG) and 1091 to 1127 (SNKT…RETG). The span at 914 to 927 (RHRQSQRRSRHRRV) shows a compositional bias: basic residues. Over residues 934–946 (SASASRSRSASQE) the composition is skewed to low complexity. At S948 the chain carries Phosphoserine. Composition is skewed to basic and acidic residues over residues 956-985 (EGEK…DLRR) and 1094-1105 (TDGEASPLKEAE). S1099 is subject to Phosphoserine. The III repeat unit spans residues 1143–1429 (NPIRRACHYI…IFVALIIITF (287 aa)). Residues 1151–1167 (YIVNLRYFEMCILLVIA) traverse the membrane as a helical segment. Over 1168–1191 (ASSIALAAEDPVLTNSERNKVLRY) the chain is Extracellular. A helical transmembrane segment spans residues 1192 to 1211 (FDYVFTGVFTFEMVIKMIDQ). Residues 1212–1219 (GLILQDGS) lie on the Cytoplasmic side of the membrane. A helical transmembrane segment spans residues 1220-1242 (YFRDLWNILDFVVVVGALVAFAL). The Extracellular segment spans residues 1243–1256 (ANALGTNKGRDIKT). A helical membrane pass occupies residues 1257–1274 (IKSLRVLRVLRPLKTIKR). The Cytoplasmic portion of the chain corresponds to 1275-1293 (LPKLKAVFDCVVTSLKNVF). The chain crosses the membrane as a helical span at residues 1294-1313 (NILIVYKLFMFIFAVIAVQL). Residues 1314 to 1400 (FKGKFFYCTD…DRGPSRSNRM (87 aa)) are Extracellular-facing. Residues 1401–1424 (EMSIFYVVYFVVFPFFFVNIFVAL) form a helical membrane-spanning segment. The Cytoplasmic segment spans residues 1425 to 1481 (IIITFQEQGDKMMEECSLEKNERACIDFAISAKPLTRYMPQNRHTFQYRVWHFVVSP). The stretch at 1466–1729 (NRHTFQYRVW…LFVAVIMDNF (264 aa)) is one IV repeat. Residues 1482–1500 (SFEYTIMAMIALNTVVLMM) form a helical membrane-spanning segment. At 1501–1515 (KYYTAPCTYELALKY) the chain is on the extracellular side. Residues 1516 to 1535 (LNIAFTMVFSLECVLKVIAF) traverse the membrane as a helical segment. At 1536-1543 (GFLNYFRD) the chain is on the cytoplasmic side. The helical transmembrane segment at 1544-1562 (TWNIFDFITVIGSITEIIL) threads the bilayer. The Extracellular segment spans residues 1563–1573 (TDSKLVNTSGF). An N-linked (GlcNAc...) asparagine glycan is attached at N1569. Residues 1574-1592 (NMSFLKLFRAARLIKLLRQ) form a helical membrane-spanning segment. Over 1593 to 1611 (GYTIRILLWTFVQSFKALP) the chain is Cytoplasmic. A helical membrane pass occupies residues 1612–1631 (YVCLLIAMLFFIYAIIGMQV). Topologically, residues 1632–1700 (FGNIKLDEES…QNESERCGTD (69 aa)) are extracellular. Residue N1692 is glycosylated (N-linked (GlcNAc...) asparagine). Residues 1701–1726 (LAYVYFVSFIFFCSFLMLNLFVAVIM) form a helical membrane-spanning segment. At 1727–2272 (DNFEYLTRDS…LSDTEEDDKC (546 aa)) the chain is on the cytoplasmic side. One can recognise an EF-hand domain in the interval 1742 to 1777 (HHLDEFVRVWAEYDRAACGRIHYTEMYEMLTLMSPP). Residues D1755, R1761, and E1766 each contribute to the Ca(2+) site. A disordered region spans residues 2021–2186 (SAHRLNSDSG…QQGQHPSPQH (166 aa)). Residues 2025 to 2045 (LNSDSGHKSDTHRSGGRERGR) show a composition bias toward basic and acidic residues. A phosphoserine mark is found at S2054 and S2073. Basic and acidic residues predominate over residues 2061 to 2078 (NSEERGTQADWESPERRQ). Low complexity predominate over residues 2097–2112 (SLSESSIPSISDTSTP). Positions 2155-2174 (LASQALESNSACLTESSNSL) are enriched in polar residues. Residues 2175–2186 (HPQQGQHPSPQH) are compositionally biased toward low complexity.

This sequence belongs to the calcium channel alpha-1 subunit (TC 1.A.1.11) family. CACNA1E subfamily. In terms of assembly, interacts with EFHC1. Voltage-dependent calcium channels are multisubunit complexes, consisting of alpha-1, alpha-2, beta and delta subunits in a 1:1:1:1 ratio. The channel activity is directed by the pore-forming and voltage-sensitive alpha-1 subunit. In many cases, this subunit is sufficient to generate voltage-sensitive calcium channel activity. The auxiliary subunits beta and alpha-2/delta linked by a disulfide bridge regulate the channel activity. Expressed in neuronal tissues, retina, spleen, and pancreatic islet cells.

Its subcellular location is the membrane. It carries out the reaction Ca(2+)(in) = Ca(2+)(out). Its function is as follows. Voltage-sensitive calcium channels (VSCC) mediate the entry of calcium ions into excitable cells and are also involved in a variety of calcium-dependent processes, including muscle contraction, hormone or neurotransmitter release, gene expression, cell motility, cell division and cell death. The isoform alpha-1E gives rise to R-type calcium currents. R-type calcium channels belong to the 'high-voltage activated' (HVA) group and are blocked by nickel. They are however insensitive to dihydropyridines (DHP). Calcium channels containing alpha-1E subunit could be involved in the modulation of firing patterns of neurons which is important for information processing. In Mus musculus (Mouse), this protein is Voltage-dependent R-type calcium channel subunit alpha-1E (Cacna1e).